We begin with the raw amino-acid sequence, 451 residues long: MAVLGSLLLLILAATLSVAVAYDPLDPNGNITIKWDVMSWTPDGYVAMVTINNYQTYRQIMAPGWTVGWTWARQEVIWSMVGAQATDQGDCSRFKANLPHCCRRTPAVVDLLPGVPYNQQIANCCRGGVLPAYGQAPSAAAAAFQVSVGQAGTTNRTVRLPRNFTLLGPGPGYTCGRARVVPSTVFLTADRRRKTQALMTWNVTCTYSQHLASKYPSCCVSFSSFYNDTIVPCAKCACGCDAHKPCVRSERDGKRLAVTGKKHDANANAHGRGNGVAAAAMAAPLLQCTTHMCPVRVHWHVKLNYREYWRAKITIVNFNYRMNYTGWTLVAQHPNLDNITEVFSFDYKPVVSYGSINDTAMFYGLKYFNDQLMEAGPHGNVQSEVLMRKDARTFTFRQGWAFPRKVYFNGDECQMPPPDSYPYLPNAAPPAAASLVGSAVAMAALVFFLMA.

Positions 1–21 (MAVLGSLLLLILAATLSVAVA) are cleaved as a signal peptide. Asparagine 30, asparagine 155, asparagine 163, asparagine 202, asparagine 227, asparagine 323, asparagine 338, and asparagine 357 each carry an N-linked (GlcNAc...) asparagine glycan. Residue asparagine 426 is the site of GPI-anchor amidated asparagine attachment. Residues 427–451 (AAPPAAASLVGSAVAMAALVFFLMA) constitute a propeptide, removed in mature form.

It belongs to the COBRA family.

Its subcellular location is the cell membrane. Functionally, involved in determining the orientation of cell expansion, probably by playing an important role in cellulose deposition. May act by recruiting cellulose synthesizing complexes to discrete positions on the cell surface. The protein is COBRA-like protein 6 (BC1L7) of Oryza sativa subsp. japonica (Rice).